The sequence spans 69 residues: Large ribosomal subunit protein bL31 (69 aa).

Positions 16, 18, 38, and 41 each coordinate Zn(2+).

Belongs to the bacterial ribosomal protein bL31 family. Type A subfamily. Part of the 50S ribosomal subunit. The cofactor is Zn(2+).

In terms of biological role, binds the 23S rRNA. The chain is Large ribosomal subunit protein bL31 from Cutibacterium acnes (strain DSM 16379 / KPA171202) (Propionibacterium acnes).